Here is a 1415-residue protein sequence, read N- to C-terminus: DNA-directed RNA polymerase subunit beta' (1415 aa).

4 residues coordinate Zn(2+): cysteine 72, cysteine 74, cysteine 87, and cysteine 90. Residues aspartate 463, aspartate 465, and aspartate 467 each contribute to the Mg(2+) site. Zn(2+) contacts are provided by cysteine 811, cysteine 885, cysteine 892, and cysteine 895.

The protein belongs to the RNA polymerase beta' chain family. As to quaternary structure, the RNAP catalytic core consists of 2 alpha, 1 beta, 1 beta' and 1 omega subunit. When a sigma factor is associated with the core the holoenzyme is formed, which can initiate transcription. The cofactor is Mg(2+). Requires Zn(2+) as cofactor.

It catalyses the reaction RNA(n) + a ribonucleoside 5'-triphosphate = RNA(n+1) + diphosphate. In terms of biological role, DNA-dependent RNA polymerase catalyzes the transcription of DNA into RNA using the four ribonucleoside triphosphates as substrates. In Cereibacter sphaeroides (strain ATCC 17029 / ATH 2.4.9) (Rhodobacter sphaeroides), this protein is DNA-directed RNA polymerase subunit beta'.